Consider the following 495-residue polypeptide: Steroid 21-hydroxylase (495 aa).

Heme b is bound by residues Arg92 and Lys121. Residue Arg234 coordinates 17alpha-hydroxyprogesterone. Residue Arg234 participates in progesterone binding. Heme b-binding residues include His366, Arg427, and Cys429.

It belongs to the cytochrome P450 family. Requires heme b as cofactor.

It is found in the endoplasmic reticulum membrane. The protein localises to the microsome membrane. The catalysed reaction is progesterone + reduced [NADPH--hemoprotein reductase] + O2 = 21-hydroxyprogesterone + oxidized [NADPH--hemoprotein reductase] + H2O + H(+). The enzyme catalyses 17alpha-hydroxyprogesterone + reduced [NADPH--hemoprotein reductase] + O2 = 11-deoxycortisol + oxidized [NADPH--hemoprotein reductase] + H2O + H(+). Functionally, a cytochrome P450 monooxygenase that plays a major role in adrenal steroidogenesis. Catalyzes the hydroxylation at C-21 of progesterone and 17alpha-hydroxyprogesterone to respectively form 11-deoxycorticosterone and 11-deoxycortisol, intermediate metabolites in the biosynthetic pathway of mineralocorticoids and glucocorticoids. Mechanistically, uses molecular oxygen inserting one oxygen atom into a substrate, and reducing the second into a water molecule, with two electrons provided by NADPH via cytochrome P450 reductase (CPR; NADPH-ferrihemoprotein reductase). This Homo sapiens (Human) protein is Steroid 21-hydroxylase (CYP21A2).